Here is a 304-residue protein sequence, read N- to C-terminus: Acetyl-coenzyme A carboxylase carboxyl transferase subunit beta (304 aa).

The CoA carboxyltransferase N-terminal domain maps to 25-294 (VWTKCDSCGQ…PSVVESKADT (270 aa)). Zn(2+) contacts are provided by Cys-29, Cys-32, Cys-48, and Cys-51. The C4-type zinc-finger motif lies at 29–51 (CDSCGQVLYRAELERNLEVCPKC).

Belongs to the AccD/PCCB family. As to quaternary structure, acetyl-CoA carboxylase is a heterohexamer composed of biotin carboxyl carrier protein (AccB), biotin carboxylase (AccC) and two subunits each of ACCase subunit alpha (AccA) and ACCase subunit beta (AccD). Zn(2+) serves as cofactor.

The protein resides in the cytoplasm. It carries out the reaction N(6)-carboxybiotinyl-L-lysyl-[protein] + acetyl-CoA = N(6)-biotinyl-L-lysyl-[protein] + malonyl-CoA. Its pathway is lipid metabolism; malonyl-CoA biosynthesis; malonyl-CoA from acetyl-CoA: step 1/1. In terms of biological role, component of the acetyl coenzyme A carboxylase (ACC) complex. Biotin carboxylase (BC) catalyzes the carboxylation of biotin on its carrier protein (BCCP) and then the CO(2) group is transferred by the transcarboxylase to acetyl-CoA to form malonyl-CoA. This Yersinia pseudotuberculosis serotype O:1b (strain IP 31758) protein is Acetyl-coenzyme A carboxylase carboxyl transferase subunit beta.